The following is a 303-amino-acid chain: DnaJ homolog subfamily C member 17 (303 aa).

In terms of domain architecture, J spans 11 to 76; sequence DLYALLGIEE…AARAAYDKVR (66 aa). 2 stretches are compositionally biased toward basic and acidic residues: residues 78 to 106 and 150 to 166; these read ARKQ…RERQ and IRQD…ENTE. Disordered regions lie at residues 78–124 and 150–170; these read ARKQ…TTTL and IRQD…GKGT. An RRM domain is found at 178–249; that stretch reads KCKKEDESQG…NPLKVSWLEG (72 aa). Lysine 264 carries the post-translational modification N6-methyllysine.

It localises to the cytoplasm. The protein localises to the nucleus. In terms of biological role, may negatively affect PAX8-induced thyroglobulin/TG transcription. The polypeptide is DnaJ homolog subfamily C member 17 (Dnajc17) (Rattus norvegicus (Rat)).